The following is a 256-amino-acid chain: Pimeloyl-[acyl-carrier protein] methyl ester esterase (256 aa).

Residues 15-242 (HLVLLHGWGL…AAHAPFISHP (228 aa)) enclose the AB hydrolase-1 domain. Residues tryptophan 22, 82–83 (SL), and 143–147 (FLALQ) contribute to the substrate site. Serine 82 serves as the catalytic Nucleophile. Residues aspartate 207 and histidine 235 contribute to the active site. Residue histidine 235 participates in substrate binding.

Belongs to the AB hydrolase superfamily. Carboxylesterase BioH family. Monomer.

The protein localises to the cytoplasm. The enzyme catalyses 6-carboxyhexanoyl-[ACP] methyl ester + H2O = 6-carboxyhexanoyl-[ACP] + methanol + H(+). It functions in the pathway cofactor biosynthesis; biotin biosynthesis. Its function is as follows. The physiological role of BioH is to remove the methyl group introduced by BioC when the pimeloyl moiety is complete. It allows to synthesize pimeloyl-ACP via the fatty acid synthetic pathway through the hydrolysis of the ester bonds of pimeloyl-ACP esters. This Escherichia coli O139:H28 (strain E24377A / ETEC) protein is Pimeloyl-[acyl-carrier protein] methyl ester esterase.